A 145-amino-acid polypeptide reads, in one-letter code: FAD synthase (145 aa).

ATP-binding positions include 5 to 6, 10 to 13, Asp92, and Tyr119; these read TF and HPGH.

This sequence belongs to the archaeal FAD synthase family. As to quaternary structure, homodimer. A divalent metal cation is required as a cofactor.

The enzyme catalyses FMN + ATP + H(+) = FAD + diphosphate. The protein operates within cofactor biosynthesis; FAD biosynthesis; FAD from FMN: step 1/1. Catalyzes the transfer of the AMP portion of ATP to flavin mononucleotide (FMN) to produce flavin adenine dinucleotide (FAD) coenzyme. This is FAD synthase from Methanothermus fervidus (strain ATCC 43054 / DSM 2088 / JCM 10308 / V24 S).